A 31-amino-acid chain; its full sequence is Chassatide C5 (31 aa).

Residues 1–31 constitute a cross-link (cyclopeptide (Gly-Asn)); that stretch reads GVIPCGESCVFIPCISSVVGCSCKNKVCYRN. Intrachain disulfides connect C5–C21, C9–C23, and C14–C28.

This is a cyclic peptide. In terms of tissue distribution, expressed in pedicel, root and stem but not in leaf and fruit (at protein level).

Probably participates in a plant defense mechanism. This Chassalia chartacea (Chassalia curviflora) protein is Chassatide C5.